A 526-amino-acid chain; its full sequence is Cytochrome P450 monooxygenase 253 (526 aa).

Transmembrane regions (helical) follow at residues isoleucine 13 to isoleucine 33, phenylalanine 115 to lysine 135, and isoleucine 306 to leucine 326. A heme-binding site is contributed by cysteine 451.

Belongs to the cytochrome P450 family. Requires heme as cofactor.

The protein resides in the membrane. Its pathway is secondary metabolite biosynthesis. Its function is as follows. Cytochrome P450 monooxygenase that is able to use delta(6)-protoilludene as a substrate to produce delta(6)-protoilludene-8-ol. In Postia placenta (strain ATCC 44394 / Madison 698-R) (Brown rot fungus), this protein is Cytochrome P450 monooxygenase 253.